Reading from the N-terminus, the 135-residue chain is Small ribosomal subunit protein uS11 (135 aa).

Belongs to the universal ribosomal protein uS11 family. Part of the 30S ribosomal subunit. Interacts with proteins S7 and S18. Binds to IF-3.

Functionally, located on the platform of the 30S subunit, it bridges several disparate RNA helices of the 16S rRNA. Forms part of the Shine-Dalgarno cleft in the 70S ribosome. This chain is Small ribosomal subunit protein uS11, found in Protochlamydia amoebophila (strain UWE25).